A 186-amino-acid polypeptide reads, in one-letter code: Photosystem I assembly protein Ycf4 (186 aa).

Helical transmembrane passes span 22–42 (FCWAFILFLGSLGFLLVGTSS) and 57–77 (IIFFPQGIVMSFYGIAGLFIS).

It belongs to the Ycf4 family.

The protein localises to the plastid. Its subcellular location is the chloroplast thylakoid membrane. In terms of biological role, seems to be required for the assembly of the photosystem I complex. This chain is Photosystem I assembly protein Ycf4, found in Vitis vinifera (Grape).